A 257-amino-acid polypeptide reads, in one-letter code: Lipid A 4'-phosphatase (257 aa).

6 consecutive transmembrane segments (helical) span residues 21–41 (FGAF…FRAF), 85–105 (IFFR…IECY), 119–139 (KLKV…NVIL), 174–194 (CSFV…LLFV), 201–221 (ALVP…LSFG), and 225–245 (LSDV…LLAL).

The protein belongs to the lipid A LpxF 4'-phosphatase family.

The protein resides in the cell inner membrane. It functions in the pathway bacterial outer membrane biogenesis; LPS lipid A biosynthesis. Its function is as follows. Probably removes the 4'-phosphate moiety from lipid A species. Not seen to act on other membrane components, nor does it dephosphorylate the 1-phosphate group of lipid A and/or lipid A precursors. This is Lipid A 4'-phosphatase from Rhizobium etli (strain ATCC 51251 / DSM 11541 / JCM 21823 / NBRC 15573 / CFN 42).